The sequence spans 460 residues: Serine--tRNA ligase (460 aa).

Residues 50-65 (DRNEVSSKIGELKQAG) are compositionally biased toward basic and acidic residues. Disordered regions lie at residues 50–71 (DRNEVSSKIGELKQAGDEDAAQ) and 109–129 (PDEDAPVGDSEAENVERRREG). The span at 109-121 (PDEDAPVGDSEAE) shows a compositional bias: acidic residues. 241-243 (TAE) contacts L-serine. ATP contacts are provided by residues 272–274 (RRE) and Val288. Glu295 provides a ligand contact to L-serine. 368-371 (EVSS) lines the ATP pocket. Residue Ser404 coordinates L-serine.

This sequence belongs to the class-II aminoacyl-tRNA synthetase family. Type-1 seryl-tRNA synthetase subfamily. Homodimer. The tRNA molecule binds across the dimer.

The protein resides in the cytoplasm. It carries out the reaction tRNA(Ser) + L-serine + ATP = L-seryl-tRNA(Ser) + AMP + diphosphate + H(+). The enzyme catalyses tRNA(Sec) + L-serine + ATP = L-seryl-tRNA(Sec) + AMP + diphosphate + H(+). The protein operates within aminoacyl-tRNA biosynthesis; selenocysteinyl-tRNA(Sec) biosynthesis; L-seryl-tRNA(Sec) from L-serine and tRNA(Sec): step 1/1. Catalyzes the attachment of serine to tRNA(Ser). Is also able to aminoacylate tRNA(Sec) with serine, to form the misacylated tRNA L-seryl-tRNA(Sec), which will be further converted into selenocysteinyl-tRNA(Sec). The chain is Serine--tRNA ligase from Halobacterium salinarum (strain ATCC 29341 / DSM 671 / R1).